The sequence spans 166 residues: 6,7-dimethyl-8-ribityllumazine synthase (166 aa).

Residues Trp31, 63-65 (SFE), and 85-87 (VII) contribute to the 5-amino-6-(D-ribitylamino)uracil site. Residue 90–91 (GT) coordinates (2S)-2-hydroxy-3-oxobutyl phosphate. His93 acts as the Proton donor in catalysis. Position 118 (Phe118) interacts with 5-amino-6-(D-ribitylamino)uracil. Arg132 is a binding site for (2S)-2-hydroxy-3-oxobutyl phosphate.

It belongs to the DMRL synthase family.

The catalysed reaction is (2S)-2-hydroxy-3-oxobutyl phosphate + 5-amino-6-(D-ribitylamino)uracil = 6,7-dimethyl-8-(1-D-ribityl)lumazine + phosphate + 2 H2O + H(+). It participates in cofactor biosynthesis; riboflavin biosynthesis; riboflavin from 2-hydroxy-3-oxobutyl phosphate and 5-amino-6-(D-ribitylamino)uracil: step 1/2. Catalyzes the formation of 6,7-dimethyl-8-ribityllumazine by condensation of 5-amino-6-(D-ribitylamino)uracil with 3,4-dihydroxy-2-butanone 4-phosphate. This is the penultimate step in the biosynthesis of riboflavin. The protein is 6,7-dimethyl-8-ribityllumazine synthase of Cutibacterium acnes (strain DSM 16379 / KPA171202) (Propionibacterium acnes).